Reading from the N-terminus, the 331-residue chain is 6-phosphogluconolactonase (331 aa).

Residue K287 is modified to N6-acetyllysine.

Belongs to the cycloisomerase 2 family.

The catalysed reaction is 6-phospho-D-glucono-1,5-lactone + H2O = 6-phospho-D-gluconate + H(+). It functions in the pathway carbohydrate degradation; pentose phosphate pathway; D-ribulose 5-phosphate from D-glucose 6-phosphate (oxidative stage): step 2/3. Catalyzes the hydrolysis of 6-phosphogluconolactone to 6-phosphogluconate. The sequence is that of 6-phosphogluconolactonase from Escherichia coli O6:K15:H31 (strain 536 / UPEC).